The following is a 285-amino-acid chain: NADPH-dependent 7-cyano-7-deazaguanine reductase (285 aa).

91–93 (IES) lines the substrate pocket. 93 to 94 (SK) provides a ligand contact to NADPH. Catalysis depends on Cys-191, which acts as the Thioimide intermediate. The active-site Proton donor is the Asp-198. 230 to 231 (HE) lines the substrate pocket. 259–260 (RG) provides a ligand contact to NADPH.

Belongs to the GTP cyclohydrolase I family. QueF type 2 subfamily. In terms of assembly, homodimer.

The protein localises to the cytoplasm. It carries out the reaction 7-aminomethyl-7-carbaguanine + 2 NADP(+) = 7-cyano-7-deazaguanine + 2 NADPH + 3 H(+). Its pathway is tRNA modification; tRNA-queuosine biosynthesis. Its function is as follows. Catalyzes the NADPH-dependent reduction of 7-cyano-7-deazaguanine (preQ0) to 7-aminomethyl-7-deazaguanine (preQ1). This chain is NADPH-dependent 7-cyano-7-deazaguanine reductase, found in Legionella pneumophila (strain Lens).